The sequence spans 38 residues: Photosystem II reaction center protein L (38 aa).

A helical membrane pass occupies residues 17–37 (SLYWGLLLIFVLAVLFSSYIF).

It belongs to the PsbL family. PSII is composed of 1 copy each of membrane proteins PsbA, PsbB, PsbC, PsbD, PsbE, PsbF, PsbH, PsbI, PsbJ, PsbK, PsbL, PsbM, PsbT, PsbX, PsbY, PsbZ, Psb30/Ycf12, at least 3 peripheral proteins of the oxygen-evolving complex and a large number of cofactors. It forms dimeric complexes.

Its subcellular location is the plastid. It is found in the chloroplast thylakoid membrane. Functionally, one of the components of the core complex of photosystem II (PSII). PSII is a light-driven water:plastoquinone oxidoreductase that uses light energy to abstract electrons from H(2)O, generating O(2) and a proton gradient subsequently used for ATP formation. It consists of a core antenna complex that captures photons, and an electron transfer chain that converts photonic excitation into a charge separation. This subunit is found at the monomer-monomer interface and is required for correct PSII assembly and/or dimerization. This chain is Photosystem II reaction center protein L, found in Ostreococcus tauri.